The primary structure comprises 215 residues: Octanoyltransferase (215 aa).

The 177-residue stretch at 33–209 folds into the BPL/LPL catalytic domain; sequence PDTPDQLWLV…QFARKLGYET (177 aa). Substrate is bound by residues 72-79, 139-141, and 152-154; these read RGGQVTYH, SLG, and GLA. Catalysis depends on Cys-170, which acts as the Acyl-thioester intermediate.

Belongs to the LipB family.

It localises to the cytoplasm. The catalysed reaction is octanoyl-[ACP] + L-lysyl-[protein] = N(6)-octanoyl-L-lysyl-[protein] + holo-[ACP] + H(+). It participates in protein modification; protein lipoylation via endogenous pathway; protein N(6)-(lipoyl)lysine from octanoyl-[acyl-carrier-protein]: step 1/2. Its function is as follows. Catalyzes the transfer of endogenously produced octanoic acid from octanoyl-acyl-carrier-protein onto the lipoyl domains of lipoate-dependent enzymes. Lipoyl-ACP can also act as a substrate although octanoyl-ACP is likely to be the physiological substrate. The polypeptide is Octanoyltransferase (Cellvibrio japonicus (strain Ueda107) (Pseudomonas fluorescens subsp. cellulosa)).